The chain runs to 345 residues: Biotin synthase (345 aa).

The region spanning 38 to 256 is the Radical SAM core domain; it reads QQVQVSTLLS…IAVARIMMPS (219 aa). [4Fe-4S] cluster is bound by residues Cys-53, Cys-57, and Cys-60. [2Fe-2S] cluster-binding residues include Cys-97, Cys-128, Cys-188, and Arg-260.

The protein belongs to the radical SAM superfamily. Biotin synthase family. In terms of assembly, homodimer. [4Fe-4S] cluster serves as cofactor. The cofactor is [2Fe-2S] cluster.

It catalyses the reaction (4R,5S)-dethiobiotin + (sulfur carrier)-SH + 2 reduced [2Fe-2S]-[ferredoxin] + 2 S-adenosyl-L-methionine = (sulfur carrier)-H + biotin + 2 5'-deoxyadenosine + 2 L-methionine + 2 oxidized [2Fe-2S]-[ferredoxin]. It participates in cofactor biosynthesis; biotin biosynthesis; biotin from 7,8-diaminononanoate: step 2/2. Catalyzes the conversion of dethiobiotin (DTB) to biotin by the insertion of a sulfur atom into dethiobiotin via a radical-based mechanism. This Photorhabdus laumondii subsp. laumondii (strain DSM 15139 / CIP 105565 / TT01) (Photorhabdus luminescens subsp. laumondii) protein is Biotin synthase.